Reading from the N-terminus, the 334-residue chain is Serine racemase (334 aa).

A Mg(2+)-binding site is contributed by Glu13. ATP contacts are provided by Ser31, Ser32, Ile33, Lys51, and Thr52. Catalysis depends on proton acceptor residues Lys56 and Ser84. Lys56 is modified (N6-(pyridoxal phosphate)lysine). Asn86 is a pyridoxal 5'-phosphate binding site. Residue Gln89 participates in ATP binding. At Cys113 the chain carries S-nitrosocysteine. Tyr121 is an ATP binding site. Asn154 is a binding site for pyridoxal 5'-phosphate. Asp178 serves as a coordination point for Mg(2+). Pyridoxal 5'-phosphate contacts are provided by Gly185, Gly186, Gly187, Gly188, and Met189. Residues Glu210, Ala214, Asp216, and Asn247 each coordinate Mg(2+). 4 residues coordinate Ca(2+): Glu210, Ala214, Asp216, and Asn247. Residues Glu210, Ala214, and Asp216 each coordinate Mn(2+). Lys279 contacts ATP. Ser313 contacts pyridoxal 5'-phosphate. An ATP-binding site is contributed by Asn316.

This sequence belongs to the serine/threonine dehydratase family. Homodimer. Requires Mg(2+) as cofactor. Mn(2+) is required as a cofactor. It depends on Ca(2+) as a cofactor. The cofactor is pyridoxal 5'-phosphate. S-nitrosylated, leading to decrease the enzyme activity.

The catalysed reaction is L-serine = D-serine. It carries out the reaction L-serine = pyruvate + NH4(+). The enzyme catalyses D-serine = pyruvate + NH4(+). In terms of biological role, catalyzes the synthesis of D-serine from L-serine. D-serine is a key coagonist with glutamate at NMDA receptors. Has dehydratase activity towards both L-serine and D-serine. This is Serine racemase (SRR) from Bos taurus (Bovine).